The chain runs to 151 residues: MRRAIFPGTFDPFTIGHYSVVKRALTFMDEVVIGIGINENKKTWFPTEKRVEMIEKLFADDPRVKVDAYDCLTIDFARAKEAQFIVRGIRTVHDFEYEETIADINRKLAGIETILLFTEPELTSISSTIVRELLQFGKDVTPFLPEGMKID.

Threonine 9 lines the substrate pocket. ATP contacts are provided by residues 9-10 (TF) and histidine 17. Residues lysine 41, threonine 73, and arginine 87 each coordinate substrate. ATP contacts are provided by residues 88–90 (GIR), glutamate 98, and 122–128 (LTSISST).

This sequence belongs to the bacterial CoaD family. Homohexamer. It depends on Mg(2+) as a cofactor.

The protein resides in the cytoplasm. The enzyme catalyses (R)-4'-phosphopantetheine + ATP + H(+) = 3'-dephospho-CoA + diphosphate. The protein operates within cofactor biosynthesis; coenzyme A biosynthesis; CoA from (R)-pantothenate: step 4/5. Reversibly transfers an adenylyl group from ATP to 4'-phosphopantetheine, yielding dephospho-CoA (dPCoA) and pyrophosphate. The chain is Phosphopantetheine adenylyltransferase from Phocaeicola vulgatus (strain ATCC 8482 / DSM 1447 / JCM 5826 / CCUG 4940 / NBRC 14291 / NCTC 11154) (Bacteroides vulgatus).